The following is a 121-amino-acid chain: DNA-directed RNA polymerase subunit omega (121 aa).

This sequence belongs to the RNA polymerase subunit omega family. The RNAP catalytic core consists of 2 alpha, 1 beta, 1 beta' and 1 omega subunit. When a sigma factor is associated with the core the holoenzyme is formed, which can initiate transcription.

The catalysed reaction is RNA(n) + a ribonucleoside 5'-triphosphate = RNA(n+1) + diphosphate. In terms of biological role, promotes RNA polymerase assembly. Latches the N- and C-terminal regions of the beta' subunit thereby facilitating its interaction with the beta and alpha subunits. The protein is DNA-directed RNA polymerase subunit omega of Syntrophobacter fumaroxidans (strain DSM 10017 / MPOB).